The following is a 241-amino-acid chain: Purine nucleoside phosphorylase DeoD-type 1 (241 aa).

Histidine 5 is a binding site for a purine D-ribonucleoside. Phosphate contacts are provided by residues glycine 21, arginine 25, arginine 44, and 88 to 91; that span reads RVGS. A purine D-ribonucleoside-binding positions include 180–182 and 204–205; these read EME and SD. Aspartate 205 functions as the Proton donor in the catalytic mechanism.

Belongs to the PNP/UDP phosphorylase family. Homohexamer; trimer of homodimers.

It carries out the reaction a purine D-ribonucleoside + phosphate = a purine nucleobase + alpha-D-ribose 1-phosphate. The enzyme catalyses a purine 2'-deoxy-D-ribonucleoside + phosphate = a purine nucleobase + 2-deoxy-alpha-D-ribose 1-phosphate. Functionally, catalyzes the reversible phosphorolytic breakdown of the N-glycosidic bond in the beta-(deoxy)ribonucleoside molecules, with the formation of the corresponding free purine bases and pentose-1-phosphate. In Photobacterium profundum (strain SS9), this protein is Purine nucleoside phosphorylase DeoD-type 1.